Consider the following 438-residue polypeptide: MVDYQGKKVVIIGLGLTGLSCVDFFLARGVVPRVVDTRISPPGLDKLPEQVERHLGSLNEDWLMSADLIVASPGVALATPILCDAADAGIEIVGDIELFCREAQAPIVAITGSNGKSTVTTLVGEMARAAGWQVGVGGNIGLPALQLLEHPAQLYVLELSSFQLETTTSLHAAAATILNVTEDHTNRYPFGLQQYRAAKLHIYEHADLCVVNADDALTMPVRGADARCRSFGVDVGDYHLNRQQGETWLRVDGERVLNTREIKLVGQHNYTNALAALALADAVKIPRASALTALTSFTGLPHRFQMAFERNGVRWINDSKATNVGSTEAALSGLAVDGTLHLLLGGDGKSADFSPLVPYLQGERIRLYCFGRDGQQLAALRPEIAEQTETMEQAMRVIAERIRPGDMVLLSPACASLDQFRSFEQRGDEFARLAEELG.

112–118 (GSNGKST) serves as a coordination point for ATP.

The protein belongs to the MurCDEF family.

It localises to the cytoplasm. The catalysed reaction is UDP-N-acetyl-alpha-D-muramoyl-L-alanine + D-glutamate + ATP = UDP-N-acetyl-alpha-D-muramoyl-L-alanyl-D-glutamate + ADP + phosphate + H(+). It functions in the pathway cell wall biogenesis; peptidoglycan biosynthesis. Cell wall formation. Catalyzes the addition of glutamate to the nucleotide precursor UDP-N-acetylmuramoyl-L-alanine (UMA). This chain is UDP-N-acetylmuramoylalanine--D-glutamate ligase, found in Pectobacterium atrosepticum (strain SCRI 1043 / ATCC BAA-672) (Erwinia carotovora subsp. atroseptica).